The primary structure comprises 93 residues: Pyrimidine/purine nucleoside phosphorylase (93 aa).

Belongs to the nucleoside phosphorylase PpnP family.

The enzyme catalyses a purine D-ribonucleoside + phosphate = a purine nucleobase + alpha-D-ribose 1-phosphate. It carries out the reaction adenosine + phosphate = alpha-D-ribose 1-phosphate + adenine. It catalyses the reaction cytidine + phosphate = cytosine + alpha-D-ribose 1-phosphate. The catalysed reaction is guanosine + phosphate = alpha-D-ribose 1-phosphate + guanine. The enzyme catalyses inosine + phosphate = alpha-D-ribose 1-phosphate + hypoxanthine. It carries out the reaction thymidine + phosphate = 2-deoxy-alpha-D-ribose 1-phosphate + thymine. It catalyses the reaction uridine + phosphate = alpha-D-ribose 1-phosphate + uracil. The catalysed reaction is xanthosine + phosphate = alpha-D-ribose 1-phosphate + xanthine. Its function is as follows. Catalyzes the phosphorolysis of diverse nucleosides, yielding D-ribose 1-phosphate and the respective free bases. Can use uridine, adenosine, guanosine, cytidine, thymidine, inosine and xanthosine as substrates. Also catalyzes the reverse reactions. The sequence is that of Pyrimidine/purine nucleoside phosphorylase from Vibrio atlanticus (strain LGP32) (Vibrio splendidus (strain Mel32)).